We begin with the raw amino-acid sequence, 822 residues long: Serine/threonine-protein kinase kin-29 (822 aa).

The 252-residue stretch at 16 to 267 folds into the Protein kinase domain; sequence YDVGRAIGKG…IQNVLQHRWM (252 aa). Residues 22-30 and Lys45 contribute to the ATP site; that span reads IGKGNFATV. The Proton acceptor role is filled by Asp138. 3 disordered regions span residues 348 to 367, 389 to 423, and 577 to 602; these read EGTGEEFPRRGSRGSILSGK, LSSPDCDSDDSSNSDLCDDSPMSSMGPMNHERQFG, and NPIPRYQRTPYTKAPPAERRSSWASP. Over residues 394–406 the composition is skewed to acidic residues; that stretch reads CDSDDSSNSDLCD.

This sequence belongs to the protein kinase superfamily. CAMK Ser/Thr protein kinase family. SNF1 subfamily. Interacts with tax-6. It depends on Mg(2+) as a cofactor. Post-translationally, autophosphorylated. Elevated cAMP levels appears to act via PKA to directly or indirectly phosphorylate multiple sites on kin-29 and inhibit function. In terms of tissue distribution, primarily neuronal, with additional expression in body wall muscle and hypodermal cells. Among neuronal cells, expressed in multiple sensory neurons and interneurons in the lateral, anterior, and lumbar ganglia, as well as in motor neurons in the ventral motor cord. Present in the AWB and AWC olfactory neurons.

The protein resides in the cytoplasm. It is found in the nucleus. It catalyses the reaction L-seryl-[protein] + ATP = O-phospho-L-seryl-[protein] + ADP + H(+). The catalysed reaction is L-threonyl-[protein] + ATP = O-phospho-L-threonyl-[protein] + ADP + H(+). In terms of biological role, regulates chemoreceptor expression by phosphorylating the hda-4 class II histone deacetylase (HDAC) and inhibiting the gene repression functions of hda-4 and the mef-2 transcription factor, enabling the correct sensing and transduction of food signals. Role in determining body size, the dauer decision and serotonin-mediated egg laying. May modulate the Sma/Mab pathway and regulates development in the later larval stages. The polypeptide is Serine/threonine-protein kinase kin-29 (Caenorhabditis elegans).